A 472-amino-acid chain; its full sequence is MNSTIAEAIKEEGIENYLKNQQHKSLLRFLTCGSVDDGKSTLIGRLLHDSRQVYEDQLKTLHSDSQKIGTTGEKLDFALLVDGLQAEREQGITIDVAYRYFSTPKRKFIIADTPGHEQYTRNMATGASTCDLAIILIDARRGVLEQTRRHSFIASLLGIRQFIVAVNKMDLVNFDEKVFDSIKKEYLEFASGLPKTDIRVVPISALDGENLVVNSELTPWYQGEPLLTMLENAEVGTRDLDLPFRMPVQLVSRPNLDFRGYMGTVAAGVVKPGDVVKVLPSGKESKVKRIVTFDGDLDYALPGEAVTITLEDEIDISRGDLLVAPDAETQVTQHVLANVVWMTEEPLQANRQYDIKLATRKTRGHVDAIRHRIDVNTLEKHDATELKLNEIGLLELSLTNAVGVDPYNTVRDTGSFIIIDRLSNVTIGAGMVVEALAGKTAGKAEFSEFELEFNALVRKHFPHWQALDISKL.

A tr-type G domain is found at 24–240 (KSLLRFLTCG…ENAEVGTRDL (217 aa)). Residues 33–40 (GSVDDGKS) form a G1 region. 33–40 (GSVDDGKS) is a binding site for GTP. A G2 region spans residues 91-95 (GITID). Residues 112 to 115 (DTPG) are G3. GTP-binding positions include 112 to 116 (DTPGH) and 167 to 170 (NKMD). The segment at 167–170 (NKMD) is G4. The G5 stretch occupies residues 204 to 206 (SAL).

It belongs to the TRAFAC class translation factor GTPase superfamily. Classic translation factor GTPase family. CysN/NodQ subfamily. Heterodimer composed of CysD, the smaller subunit, and CysN.

The catalysed reaction is sulfate + ATP + H(+) = adenosine 5'-phosphosulfate + diphosphate. It functions in the pathway sulfur metabolism; hydrogen sulfide biosynthesis; sulfite from sulfate: step 1/3. In terms of biological role, with CysD forms the ATP sulfurylase (ATPS) that catalyzes the adenylation of sulfate producing adenosine 5'-phosphosulfate (APS) and diphosphate, the first enzymatic step in sulfur assimilation pathway. APS synthesis involves the formation of a high-energy phosphoric-sulfuric acid anhydride bond driven by GTP hydrolysis by CysN coupled to ATP hydrolysis by CysD. This Tolumonas auensis (strain DSM 9187 / NBRC 110442 / TA 4) protein is Sulfate adenylyltransferase subunit 1.